Here is a 183-residue protein sequence, read N- to C-terminus: ATP synthase subunit delta (183 aa).

Belongs to the ATPase delta chain family. In terms of assembly, F-type ATPases have 2 components, F(1) - the catalytic core - and F(0) - the membrane proton channel. F(1) has five subunits: alpha(3), beta(3), gamma(1), delta(1), epsilon(1). F(0) has three main subunits: a(1), b(2) and c(10-14). The alpha and beta chains form an alternating ring which encloses part of the gamma chain. F(1) is attached to F(0) by a central stalk formed by the gamma and epsilon chains, while a peripheral stalk is formed by the delta and b chains.

It localises to the cell membrane. Functionally, f(1)F(0) ATP synthase produces ATP from ADP in the presence of a proton or sodium gradient. F-type ATPases consist of two structural domains, F(1) containing the extramembraneous catalytic core and F(0) containing the membrane proton channel, linked together by a central stalk and a peripheral stalk. During catalysis, ATP synthesis in the catalytic domain of F(1) is coupled via a rotary mechanism of the central stalk subunits to proton translocation. Its function is as follows. This protein is part of the stalk that links CF(0) to CF(1). It either transmits conformational changes from CF(0) to CF(1) or is implicated in proton conduction. In Oenococcus oeni (strain ATCC BAA-331 / PSU-1), this protein is ATP synthase subunit delta.